The chain runs to 367 residues: tRNA-specific 2-thiouridylase MnmA (367 aa).

Residues 11 to 18 and Leu-37 each bind ATP; that span reads GLSGGVDS. Catalysis depends on Cys-99, which acts as the Nucleophile. Cys-99 and Cys-195 form a disulfide bridge. ATP is bound at residue Gly-123. The tract at residues 145–147 is interaction with tRNA; sequence KDQ. Cys-195 (cysteine persulfide intermediate) is an active-site residue. An interaction with tRNA region spans residues 304-305; sequence RY.

It belongs to the MnmA/TRMU family.

It localises to the cytoplasm. The enzyme catalyses S-sulfanyl-L-cysteinyl-[protein] + uridine(34) in tRNA + AH2 + ATP = 2-thiouridine(34) in tRNA + L-cysteinyl-[protein] + A + AMP + diphosphate + H(+). In terms of biological role, catalyzes the 2-thiolation of uridine at the wobble position (U34) of tRNA, leading to the formation of s(2)U34. The chain is tRNA-specific 2-thiouridylase MnmA from Chlorobium luteolum (strain DSM 273 / BCRC 81028 / 2530) (Pelodictyon luteolum).